We begin with the raw amino-acid sequence, 72 residues long: Conotoxin Gla(2)-TxVI/B (72 aa).

Positions 1–19 (MEKLIILLLVAAVLMSTQA) are cleaved as a signal peptide. Residues 20–44 (LFQEKRTMKKIDFLSKGKADAEKQR) constitute a propeptide that is removed on maturation. Intrachain disulfides connect Cys48/Cys62, Cys55/Cys66, and Cys61/Cys70. Glu56 carries the 4-carboxyglutamate modification. Pro58 is subject to 4-hydroxyproline. Ser71 carries the post-translational modification Serine amide.

In terms of processing, brominated at one of the Trp residues. As to expression, expressed by the venom duct.

It is found in the secreted. In Conus textile (Cloth-of-gold cone), this protein is Conotoxin Gla(2)-TxVI/B.